Reading from the N-terminus, the 478-residue chain is Probable sodium/glutamine symporter GlnT (478 aa).

10 helical membrane-spanning segments follow: residues 14–34, 85–105, 145–165, 185–205, 211–231, 236–256, 298–318, 342–362, 381–401, and 411–431; these read DLLWSKLLIVLLLSFGIYFTF, IAIAIALGGPGAIFWMWIIAI, WMGALFAVLITLSFGIVFNSV, LGLILIAVFGTIIFGGVKRIA, IVVVLAVLYIGVAFFVIFSNI, GVLALIVKNAFGFDQAAGGAL, AFGVLTDTLVICTSTAFIILF, GSWASGFLAILILLFGFCALI, LIFVYRIGVLAMIVFGCVAKV, and FMGLMVIVNLIAIFLLSKVVF.

This sequence belongs to the alanine or glycine:cation symporter (AGCS) (TC 2.A.25) family.

It is found in the cell membrane. Functionally, probably functions as a sodium/glutamine symporter for glutamine uptake. In Bacillus subtilis (strain 168), this protein is Probable sodium/glutamine symporter GlnT (glnT).